A 144-amino-acid polypeptide reads, in one-letter code: 3-hydroxyacyl-[acyl-carrier-protein] dehydratase FabZ (144 aa).

The active site involves H48.

The protein belongs to the thioester dehydratase family. FabZ subfamily.

Its subcellular location is the cytoplasm. The enzyme catalyses a (3R)-hydroxyacyl-[ACP] = a (2E)-enoyl-[ACP] + H2O. In terms of biological role, involved in unsaturated fatty acids biosynthesis. Catalyzes the dehydration of short chain beta-hydroxyacyl-ACPs and long chain saturated and unsaturated beta-hydroxyacyl-ACPs. This Bacillus cereus (strain AH187) protein is 3-hydroxyacyl-[acyl-carrier-protein] dehydratase FabZ.